The following is a 223-amino-acid chain: Phosphoglycolate phosphatase (223 aa).

Catalysis depends on Asp-10, which acts as the Nucleophile. Mg(2+) is bound by residues Asp-10 and Asp-12. Lys-149 is a substrate binding site. 2 residues coordinate Mg(2+): Asp-172 and Asp-176.

It belongs to the archaeal SPP-like hydrolase family. Mg(2+) is required as a cofactor.

It carries out the reaction 2-phosphoglycolate + H2O = glycolate + phosphate. Catalyzes the dephosphorylation of 2-phosphoglycolate. This is Phosphoglycolate phosphatase from Archaeoglobus fulgidus (strain ATCC 49558 / DSM 4304 / JCM 9628 / NBRC 100126 / VC-16).